The chain runs to 514 residues: Steroid 17-alpha-hydroxylase/17,20 lyase (514 aa).

Cys445 is a heme binding site.

It belongs to the cytochrome P450 family. Requires heme as cofactor.

It localises to the membrane. The enzyme catalyses a C21-steroid + reduced [NADPH--hemoprotein reductase] + O2 = a 17alpha-hydroxy-C21-steroid + oxidized [NADPH--hemoprotein reductase] + H2O + H(+). It carries out the reaction 17alpha-hydroxyprogesterone + reduced [NADPH--hemoprotein reductase] + O2 = androst-4-ene-3,17-dione + acetate + oxidized [NADPH--hemoprotein reductase] + H2O + 2 H(+). It catalyses the reaction 17alpha-hydroxypregnenolone + reduced [NADPH--hemoprotein reductase] + O2 = 3beta-hydroxyandrost-5-en-17-one + acetate + oxidized [NADPH--hemoprotein reductase] + H2O + 2 H(+). It participates in lipid metabolism; steroid biosynthesis. In terms of biological role, conversion of pregnenolone and progesterone to their 17-alpha-hydroxylated products and subsequently to dehydroepiandrosterone (DHEA) and androstenedione. Catalyzes both the 17-alpha-hydroxylation and the 17,20-lyase reaction. The polypeptide is Steroid 17-alpha-hydroxylase/17,20 lyase (cyp17a1) (Ictalurus punctatus (Channel catfish)).